The sequence spans 206 residues: Small ribosomal subunit protein uS4 (206 aa).

An S4 RNA-binding domain is found at 96 to 156 (TRLDNVVYRM…EKSKTQARII (61 aa)).

Belongs to the universal ribosomal protein uS4 family. As to quaternary structure, part of the 30S ribosomal subunit. Contacts protein S5. The interaction surface between S4 and S5 is involved in control of translational fidelity.

In terms of biological role, one of the primary rRNA binding proteins, it binds directly to 16S rRNA where it nucleates assembly of the body of the 30S subunit. Its function is as follows. With S5 and S12 plays an important role in translational accuracy. The polypeptide is Small ribosomal subunit protein uS4 (Colwellia psychrerythraea (strain 34H / ATCC BAA-681) (Vibrio psychroerythus)).